A 203-amino-acid polypeptide reads, in one-letter code: MKLRWFAFLVVLLAGCSSKQDYKNPPWNAEVPVKRAMQWMPISEKAGEAWGVSPRLITAIIAIESGGNPTVVSKSGAVGLMQLKASTSGRDVYRHMGWSGEPSTSELKNPERNISMGTAYLSILEHGSLAGINDPQVMQYALVVSYANGAGALLRTFSSDRKKAIEKINDLSADEFFEHVAKNHPAPQAPRYIWKLQQALDAM.

An N-terminal signal peptide occupies residues methionine 1–glycine 15. A lipid anchor (N-palmitoyl cysteine) is attached at cysteine 16. A lipid anchor (S-diacylglycerol cysteine) is attached at cysteine 16.

It belongs to the transglycosylase Slt family.

Its subcellular location is the cell outer membrane. It catalyses the reaction Endolytic cleavage of the (1-&gt;4)-beta-glycosidic linkage between N-acetylmuramic acid (MurNAc) and N-acetylglucosamine (GlcNAc) residues in peptidoglycan with concomitant formation of a 1,6-anhydrobond in the MurNAc residue.. In terms of biological role, murein-degrading enzyme. May play a role in recycling of muropeptides during cell elongation and/or cell division. Preferentially cleaves at a distance of more than two disaccharide units from the ends of the glycan chain. The sequence is that of Endo-type membrane-bound lytic murein transglycosylase A from Citrobacter koseri (strain ATCC BAA-895 / CDC 4225-83 / SGSC4696).